A 141-amino-acid chain; its full sequence is Nucleoside diphosphate kinase (141 aa).

Lys-11, Phe-59, Arg-87, Thr-93, Arg-104, and Asn-114 together coordinate ATP. The active-site Pros-phosphohistidine intermediate is the His-117.

Belongs to the NDK family. In terms of assembly, homotetramer. Mg(2+) is required as a cofactor.

It localises to the cytoplasm. It catalyses the reaction a 2'-deoxyribonucleoside 5'-diphosphate + ATP = a 2'-deoxyribonucleoside 5'-triphosphate + ADP. The catalysed reaction is a ribonucleoside 5'-diphosphate + ATP = a ribonucleoside 5'-triphosphate + ADP. In terms of biological role, major role in the synthesis of nucleoside triphosphates other than ATP. The ATP gamma phosphate is transferred to the NDP beta phosphate via a ping-pong mechanism, using a phosphorylated active-site intermediate. This Alkalilimnicola ehrlichii (strain ATCC BAA-1101 / DSM 17681 / MLHE-1) protein is Nucleoside diphosphate kinase.